We begin with the raw amino-acid sequence, 87 residues long: Retinal rod rhodopsin-sensitive cGMP 3',5'-cyclic phosphodiesterase subunit gamma (87 aa).

The residue at position 1 (Met1) is an N-acetylmethionine. The disordered stretch occupies residues 16 to 54; the sequence is VVGGPVTPRKGPPKFKQRQTRQFKSKPPKKGVQGFGDDI. Basic residues predominate over residues 26–44; sequence GPPKFKQRQTRQFKSKPPK.

This sequence belongs to the rod/cone cGMP-PDE gamma subunit family. As to quaternary structure, oligomer composed of two catalytic chains (alpha and beta), an inhibitory chain (gamma) and the delta chain.

The catalysed reaction is 3',5'-cyclic GMP + H2O = GMP + H(+). Participates in processes of transmission and amplification of the visual signal. cGMP-PDEs are the effector molecules in G-protein-mediated phototransduction in vertebrate rods and cones. The polypeptide is Retinal rod rhodopsin-sensitive cGMP 3',5'-cyclic phosphodiesterase subunit gamma (PDE6G) (Cavia porcellus (Guinea pig)).